The following is a 261-amino-acid chain: Chanoclavine-I dehydrogenase ifgE (261 aa).

An N-terminal signal peptide occupies residues 1–20 (MASVKSRVFAITGGASGIGA). NADP(+) contacts are provided by I18, K48, D66, R132, Y166, K170, and T201. Y166 functions as the Proton acceptor in the catalytic mechanism. K170 (lowers pKa of active site Tyr) is an active-site residue.

It belongs to the short-chain dehydrogenases/reductases (SDR) family.

The protein operates within alkaloid biosynthesis; ergot alkaloid biosynthesis. In terms of biological role, chanoclavine-I dehydrogenase; part of the gene cluster that mediates the biosynthesis of isofumigaclavines, fungal ergot alkaloids. The tryptophan dimethylallyltransferase ifgA catalyzes the first step of ergot alkaloid biosynthesis by condensing dimethylallyl diphosphate (DMAP) and tryptophan to form 4-dimethylallyl-L-tryptophan. The second step is catalyzed by the methyltransferase ifgB that methylates 4-dimethylallyl-L-tryptophan in the presence of S-adenosyl-L-methionine, resulting in the formation of N-methyl-dimethylallyl-L-tryptophan. The catalase ifgD and the FAD-dependent oxidoreductase ifgC then transform N-methyl-dimethylallyl-L-tryptophan to chanoclavine-I which is further oxidized by ifgE in the presence of NAD(+), resulting in the formation of chanoclavine-I aldehyde. The chanoclavine-I aldehyde reductases ifgG and/or fgaOx3 reduce chanoclavine-I aldehyde to dihydrochanoclavine-I aldehyde that spontaneously dehydrates to form 6,8-dimethyl-6,7-didehydroergoline. The festuclavine dehydrogenases ifgF1 and/or ifgF2 then catalyze the reduction of 6,8-dimethyl-6,7-didehydroergoline to form festuclavine. Hydrolysis of festuclavine by a yet undetermined cytochrome P450 monooxygenase (called ifgH) then leads to the formation of isofumigaclavine B which is in turn acetylated by ifgI to isofumigaclavine A. Penicillium roqueforti has interestingly at least two sets of genes for the consumption of chanoclavine-I aldehyde on three different loci, the OYEs ifgG/fgaOx3 and the festuclavine synthase homologs ifgF1/ifgF2. The reason for the duplication of these genes is unclear, probably to ensure the conversion of chanoclavine-I aldehyde by differential gene expression under various environmental conditions. The sequence is that of Chanoclavine-I dehydrogenase ifgE from Penicillium roqueforti (strain FM164).